Reading from the N-terminus, the 1182-residue chain is Myosin IC heavy chain (1182 aa).

Residues 15 to 698 (EGLDDMTLLS…MLFSLEETRE (684 aa)) form the Myosin motor domain. An ATP-binding site is contributed by 109 to 116 (GESGAGKT). The tract at residues 571-593 (AAELVATLMKSTPHYIRTIKPND) is actin-binding. In terms of domain architecture, TH1 spans 774 to 957 (RNRFSMISVR…QFHIASGLPA (184 aa)). Disordered stretches follow at residues 999 to 1052 (KPAP…PAPG) and 1064 to 1103 (SKPLPSPTGAPMMKKPAPTAPGGPAPAGAPTPMMKKPAGQ). A compositionally biased stretch (low complexity) spans 1013–1042 (KKPAPTAPGGAPMMKKPAPAPGGAPMMKKP). The segment covering 1081-1092 (PTAPGGPAPAGA) has biased composition (pro residues). The 60-residue stretch at 1123-1182 (PPPQQYIALYEYDAMQPDELTFKENDVINLIKKVDADWWQGELVRTKQIGMLPSNYVQQI) folds into the SH3 domain.

Belongs to the TRAFAC class myosin-kinesin ATPase superfamily. Myosin family. Myosin I heavy chain is single-headed. Dimer of a heavy and a light chain. Inability to self-assemble into filaments.

The protein resides in the cell projection. It is found in the lamellipodium. Myosin is a protein that binds to actin and has ATPase activity that is activated by actin. Involved in the process of phagocytosis and appears to support streaming behavior. The protein is Myosin IC heavy chain (myoC) of Dictyostelium discoideum (Social amoeba).